A 1151-amino-acid polypeptide reads, in one-letter code: Protein kinase C-like 1 (1151 aa).

2 consecutive REM-1 domains span residues 1-67 (MSFS…KTAQ) and 106-183 (KYDC…INVD). Residues 64-88 (KTAQQSQGENGSEDNERCNSKEYGF) form a disordered region. One can recognise a C2 domain in the interval 190-309 (QPNDIMDNQQ…IRKKKAGQTN (120 aa)). Ser226 bears the Phosphoserine mark. Residues 306–331 (GQTNEQQGWVNASNINGGSSLASEEG) form a disordered region. 2 consecutive Phorbol-ester/DAG-type zinc fingers follow at residues 414-461 (GHHF…VTKC) and 481-531 (PHRF…PDFC). Disordered regions lie at residues 546–620 (QDTK…IIDK) and 649–669 (AQQT…SNRR). A compositionally biased stretch (polar residues) spans 560 to 577 (PSAQLGSSIGTANGSDLS). Basic and acidic residues predominate over residues 605–620 (VGRDSPTKQHDPIIDK). Phosphoserine is present on Ser761. The tract at residues 782-816 (LAPTSTHASRTTDQQSPQKSQTSTSAKHKKRAAKR) is disordered. The segment covering 792-806 (TTDQQSPQKSQTSTS) has biased composition (low complexity). Residues 807-816 (AKHKKRAAKR) show a composition bias toward basic residues. The region spanning 824-1083 (FVLLKVLGKG…ADEVMEEPFF (260 aa)) is the Protein kinase domain. ATP-binding positions include 830 to 838 (LGKGNFGKV) and Lys853. Catalysis depends on Asp949, which acts as the Proton acceptor. One can recognise an AGC-kinase C-terminal domain in the interval 1084–1151 (RNINFDDILN…FSFMPDDLDL (68 aa)).

The protein belongs to the protein kinase superfamily. AGC Ser/Thr protein kinase family. PKC subfamily.

The enzyme catalyses L-seryl-[protein] + ATP = O-phospho-L-seryl-[protein] + ADP + H(+). The catalysed reaction is L-threonyl-[protein] + ATP = O-phospho-L-threonyl-[protein] + ADP + H(+). In terms of biological role, required for cell growth and for the G2-&gt;M transition of the cell division cycle. Mediates a protein kinase cascade; it activates BCK1 which itself activates MKK1/MKK2. The sequence is that of Protein kinase C-like 1 (PKC1) from Saccharomyces cerevisiae (strain ATCC 204508 / S288c) (Baker's yeast).